The following is a 390-amino-acid chain: 1-deoxy-D-xylulose 5-phosphate reductoisomerase (390 aa).

Residues threonine 10, glycine 11, serine 12, valine 13, and asparagine 124 each contribute to the NADPH site. Lysine 125 contacts 1-deoxy-D-xylulose 5-phosphate. Glutamate 126 contacts NADPH. Aspartate 150 lines the Mn(2+) pocket. 1-deoxy-D-xylulose 5-phosphate-binding residues include serine 151, glutamate 152, serine 181, and histidine 204. Glutamate 152 contributes to the Mn(2+) binding site. Glycine 210 serves as a coordination point for NADPH. 1-deoxy-D-xylulose 5-phosphate contacts are provided by serine 217, asparagine 222, lysine 223, and glutamate 226. Mn(2+) is bound at residue glutamate 226.

It belongs to the DXR family. It depends on Mg(2+) as a cofactor. Requires Mn(2+) as cofactor.

It carries out the reaction 2-C-methyl-D-erythritol 4-phosphate + NADP(+) = 1-deoxy-D-xylulose 5-phosphate + NADPH + H(+). Its pathway is isoprenoid biosynthesis; isopentenyl diphosphate biosynthesis via DXP pathway; isopentenyl diphosphate from 1-deoxy-D-xylulose 5-phosphate: step 1/6. Functionally, catalyzes the NADPH-dependent rearrangement and reduction of 1-deoxy-D-xylulose-5-phosphate (DXP) to 2-C-methyl-D-erythritol 4-phosphate (MEP). This chain is 1-deoxy-D-xylulose 5-phosphate reductoisomerase, found in Janthinobacterium sp. (strain Marseille) (Minibacterium massiliensis).